The chain runs to 450 residues: Signal recognition particle protein (450 aa).

GTP is bound by residues 107–114 (GLQGVGKT), 190–194 (DTAGR), and 248–251 (TKTD).

The protein belongs to the GTP-binding SRP family. SRP54 subfamily. In terms of assembly, part of the signal recognition particle protein translocation system, which is composed of SRP and FtsY. SRP is a ribonucleoprotein composed of Ffh and a 4.5S RNA molecule.

The protein resides in the cytoplasm. The enzyme catalyses GTP + H2O = GDP + phosphate + H(+). In terms of biological role, involved in targeting and insertion of nascent membrane proteins into the cytoplasmic membrane. Binds to the hydrophobic signal sequence of the ribosome-nascent chain (RNC) as it emerges from the ribosomes. The SRP-RNC complex is then targeted to the cytoplasmic membrane where it interacts with the SRP receptor FtsY. Interaction with FtsY leads to the transfer of the RNC complex to the Sec translocase for insertion into the membrane, the hydrolysis of GTP by both Ffh and FtsY, and the dissociation of the SRP-FtsY complex into the individual components. This chain is Signal recognition particle protein, found in Buchnera aphidicola subsp. Schizaphis graminum (strain Sg).